A 98-amino-acid chain; its full sequence is uncharacterized protein (98 aa).

This is an uncharacterized protein from Methanocaldococcus jannaschii (strain ATCC 43067 / DSM 2661 / JAL-1 / JCM 10045 / NBRC 100440) (Methanococcus jannaschii).